Consider the following 356-residue polypeptide: S-adenosylmethionine:tRNA ribosyltransferase-isomerase (356 aa).

The protein belongs to the QueA family. As to quaternary structure, monomer.

It is found in the cytoplasm. It catalyses the reaction 7-aminomethyl-7-carbaguanosine(34) in tRNA + S-adenosyl-L-methionine = epoxyqueuosine(34) in tRNA + adenine + L-methionine + 2 H(+). It participates in tRNA modification; tRNA-queuosine biosynthesis. In terms of biological role, transfers and isomerizes the ribose moiety from AdoMet to the 7-aminomethyl group of 7-deazaguanine (preQ1-tRNA) to give epoxyqueuosine (oQ-tRNA). This Yersinia pestis protein is S-adenosylmethionine:tRNA ribosyltransferase-isomerase.